We begin with the raw amino-acid sequence, 361 residues long: Phosphoserine aminotransferase (361 aa).

R42 contributes to the L-glutamate binding site. Pyridoxal 5'-phosphate-binding positions include 76-77, W102, T153, D173, and Q196; that span reads AR. An N6-(pyridoxal phosphate)lysine modification is found at K197. 238–239 contacts pyridoxal 5'-phosphate; it reads NT.

The protein belongs to the class-V pyridoxal-phosphate-dependent aminotransferase family. SerC subfamily. As to quaternary structure, homodimer. The cofactor is pyridoxal 5'-phosphate.

The protein localises to the cytoplasm. The catalysed reaction is O-phospho-L-serine + 2-oxoglutarate = 3-phosphooxypyruvate + L-glutamate. It carries out the reaction 4-(phosphooxy)-L-threonine + 2-oxoglutarate = (R)-3-hydroxy-2-oxo-4-phosphooxybutanoate + L-glutamate. Its pathway is amino-acid biosynthesis; L-serine biosynthesis; L-serine from 3-phospho-D-glycerate: step 2/3. The protein operates within cofactor biosynthesis; pyridoxine 5'-phosphate biosynthesis; pyridoxine 5'-phosphate from D-erythrose 4-phosphate: step 3/5. Its function is as follows. Catalyzes the reversible conversion of 3-phosphohydroxypyruvate to phosphoserine and of 3-hydroxy-2-oxo-4-phosphonooxybutanoate to phosphohydroxythreonine. The chain is Phosphoserine aminotransferase from Buchnera aphidicola subsp. Schizaphis graminum (strain Sg).